Consider the following 208-residue polypeptide: ATP-dependent dethiobiotin synthetase BioD (208 aa).

11–16 (EVGKTF) contacts ATP. Threonine 15 contributes to the Mg(2+) binding site. Residue lysine 31 is part of the active site. Residue serine 35 coordinates substrate. ATP-binding positions include aspartate 42, 95–98 (ETSG), and 155–156 (NQ). Mg(2+)-binding residues include aspartate 42 and glutamate 95.

This sequence belongs to the dethiobiotin synthetase family. As to quaternary structure, homodimer. The cofactor is Mg(2+).

It is found in the cytoplasm. The catalysed reaction is (7R,8S)-7,8-diammoniononanoate + CO2 + ATP = (4R,5S)-dethiobiotin + ADP + phosphate + 3 H(+). It participates in cofactor biosynthesis; biotin biosynthesis; biotin from 7,8-diaminononanoate: step 1/2. Its function is as follows. Catalyzes a mechanistically unusual reaction, the ATP-dependent insertion of CO2 between the N7 and N8 nitrogen atoms of 7,8-diaminopelargonic acid (DAPA, also called 7,8-diammoniononanoate) to form a ureido ring. This is ATP-dependent dethiobiotin synthetase BioD from Chlamydia felis (strain Fe/C-56) (Chlamydophila felis).